The sequence spans 233 residues: Small ribosomal subunit protein uS3 (233 aa).

The 69-residue stretch at 39 to 107 (VREFLKKRLG…PVHVNIEEVR (69 aa)) folds into the KH type-2 domain. The disordered stretch occupies residues 212–233 (VQATPAAPEKKMRKGARNAAAN).

Belongs to the universal ribosomal protein uS3 family. As to quaternary structure, part of the 30S ribosomal subunit. Forms a tight complex with proteins S10 and S14.

Binds the lower part of the 30S subunit head. Binds mRNA in the 70S ribosome, positioning it for translation. This chain is Small ribosomal subunit protein uS3, found in Chromobacterium violaceum (strain ATCC 12472 / DSM 30191 / JCM 1249 / CCUG 213 / NBRC 12614 / NCIMB 9131 / NCTC 9757 / MK).